The following is a 1233-amino-acid chain: Reverse gyrase 2 (1233 aa).

Residues 1 to 41 (MNTIPSSNYLSSCPNCGRVISAERLYKGSVCSECLEEDREF) form an RG N-terminal-type zinc finger. Zn(2+)-binding residues include C13, C16, C31, and C34. ATP-binding positions include Q89 and 106-113 (APPGLGKT). One can recognise a Helicase ATP-binding domain in the interval 93 to 296 (IIRVLRKESF…ALMGFRPGSS (204 aa)). The DEAD box signature appears at 212 to 215 (DDVD). A topoisomerase I region spans residues 606–1233 (QKVKTVLFIV…DIYYEIKSIR (628 aa)). Residues 610–774 (TVLFIVESPN…NIKRAEFHEV (165 aa)) enclose the Toprim domain. Position 616 (E616) interacts with Mg(2+). The RG C-terminal-type; atypical zinc finger occupies 691–720 (IKKCINGHQFTDFEQGNQCPKCHTTQIILD). Positions 694, 698, 709, and 712 each coordinate Zn(2+). D743 is a Mg(2+) binding site. In terms of domain architecture, Topo IA-type catalytic spans 790–1233 (NVNLVKSQIV…DIYYEIKSIR (444 aa)). The O-(5'-phospho-DNA)-tyrosine intermediate role is filled by Y947.

The protein in the N-terminal section; belongs to the DEAD box helicase family. DDVD subfamily. In the C-terminal section; belongs to the type IA topoisomerase family. As to quaternary structure, monomer. Requires Zn(2+) as cofactor. Mg(2+) serves as cofactor.

The protein resides in the cytoplasm. The enzyme catalyses ATP + H2O = ADP + phosphate + H(+). In terms of biological role, modifies the topological state of DNA by introducing positive supercoils in an ATP-dependent process, increasing the linking number in steps of +1. Binds to single-stranded DNA, transiently cleaves and then rejoins the ends, introducing a positive supercoil in the process. The scissile phosphodiester is attacked by the catalytic tyrosine of the enzyme, resulting in the formation of a DNA-(5'-phosphotyrosyl)-enzyme intermediate. Probably involved in rewinding DNA strands in regions of the chromosome that have opened up to allow replication, transcription, DNA repair and/or for DNA protection. The polypeptide is Reverse gyrase 2 (Sulfurisphaera tokodaii (strain DSM 16993 / JCM 10545 / NBRC 100140 / 7) (Sulfolobus tokodaii)).